A 377-amino-acid polypeptide reads, in one-letter code: Succinyl-diaminopimelate desuccinylase (377 aa).

Residue His-66 coordinates Zn(2+). Asp-68 is a catalytic residue. Asp-99 contributes to the Zn(2+) binding site. The active-site Proton acceptor is Glu-133. Zn(2+) is bound by residues Glu-134, Glu-163, and His-349.

It belongs to the peptidase M20A family. DapE subfamily. In terms of assembly, homodimer. Requires Zn(2+) as cofactor. The cofactor is Co(2+).

It carries out the reaction N-succinyl-(2S,6S)-2,6-diaminopimelate + H2O = (2S,6S)-2,6-diaminopimelate + succinate. It functions in the pathway amino-acid biosynthesis; L-lysine biosynthesis via DAP pathway; LL-2,6-diaminopimelate from (S)-tetrahydrodipicolinate (succinylase route): step 3/3. In terms of biological role, catalyzes the hydrolysis of N-succinyl-L,L-diaminopimelic acid (SDAP), forming succinate and LL-2,6-diaminopimelate (DAP), an intermediate involved in the bacterial biosynthesis of lysine and meso-diaminopimelic acid, an essential component of bacterial cell walls. This Legionella pneumophila (strain Lens) protein is Succinyl-diaminopimelate desuccinylase.